A 562-amino-acid chain; its full sequence is Thermosome subunit alpha (562 aa).

Disordered regions lie at residues 1–23 (MAQQMGNQPLIVLSEDSQRTSGE) and 526–551 (GGQVGDDDGDDGPAGGPGGMGGGMGG). Residues 537 to 551 (GPAGGPGGMGGGMGG) show a composition bias toward gly residues.

Belongs to the TCP-1 chaperonin family. As to quaternary structure, forms an oligomeric complex of eight-membered rings.

Its function is as follows. Molecular chaperone; binds unfolded polypeptides in vitro, and has a weak ATPase activity. In Halobacterium salinarum (strain ATCC 700922 / JCM 11081 / NRC-1) (Halobacterium halobium), this protein is Thermosome subunit alpha (thsA).